The primary structure comprises 423 residues: Adenylosuccinate synthetase (423 aa).

Residues 12–18 (GDEGKGK) and 40–42 (GHT) contribute to the GTP site. Residue aspartate 13 is the Proton acceptor of the active site. Residues aspartate 13 and glycine 40 each coordinate Mg(2+). Residues 13–16 (DEGK), 38–41 (NAGH), threonine 129, arginine 143, glutamine 221, threonine 236, and arginine 300 contribute to the IMP site. The active-site Proton donor is histidine 41. Substrate is bound at residue 296-302 (SVTGRKR). GTP contacts are provided by residues arginine 302 and 408–410 (SVG).

This sequence belongs to the adenylosuccinate synthetase family. In terms of assembly, homodimer. Requires Mg(2+) as cofactor.

It is found in the cytoplasm. It carries out the reaction IMP + L-aspartate + GTP = N(6)-(1,2-dicarboxyethyl)-AMP + GDP + phosphate + 2 H(+). Its pathway is purine metabolism; AMP biosynthesis via de novo pathway; AMP from IMP: step 1/2. Its function is as follows. Plays an important role in the de novo pathway of purine nucleotide biosynthesis. Catalyzes the first committed step in the biosynthesis of AMP from IMP. This chain is Adenylosuccinate synthetase, found in Bacteroides thetaiotaomicron (strain ATCC 29148 / DSM 2079 / JCM 5827 / CCUG 10774 / NCTC 10582 / VPI-5482 / E50).